Consider the following 350-residue polypeptide: Alcohol dehydrogenase 1 (350 aa).

8 residues coordinate Zn(2+): cysteine 44, threonine 46, histidine 67, cysteine 98, cysteine 101, cysteine 104, cysteine 112, and cysteine 154. Residues threonine 46 and histidine 67 each contribute to the an alcohol site. Threonine 46 is an NAD(+) binding site. NAD(+) is bound by residues 178–182 (GAGGG), aspartate 202, lysine 207, 271–273 (IGL), and arginine 343.

The protein belongs to the zinc-containing alcohol dehydrogenase family. In terms of assembly, homotetramer. Requires Zn(2+) as cofactor.

Its subcellular location is the cytoplasm. The protein resides in the secreted. The enzyme catalyses a primary alcohol + NAD(+) = an aldehyde + NADH + H(+). The catalysed reaction is a secondary alcohol + NAD(+) = a ketone + NADH + H(+). This Emericella nidulans (strain FGSC A4 / ATCC 38163 / CBS 112.46 / NRRL 194 / M139) (Aspergillus nidulans) protein is Alcohol dehydrogenase 1 (alcA).